The chain runs to 407 residues: uncharacterized protein (407 aa).

Coiled-coil stretches lie at residues 96-130 and 287-345; these read TDSIEYEDEKLNELEKTRKEHTDKVKLMQQQFKNE and MKCY…AKTS. A compositionally biased stretch (basic and acidic residues) spans 302-317; sequence EKRKDNLQKQNEEAAK. Residues 302–394 form a disordered region; sequence EKRKDNLQKQ…NMDPAINESD (93 aa). Over residues 318–331 the composition is skewed to basic residues; it reads ITKRKNRQEKRREK. The segment covering 344–370 has biased composition (low complexity); sequence TSVSSIPDTSSTTTSTNSTPTNTKSNS.

This is an uncharacterized protein from Acanthamoeba polyphaga (Amoeba).